The sequence spans 199 residues: Adenylyl-sulfate kinase (199 aa).

Residue 35 to 42 (GLSGSGKS) coordinates ATP. The active-site Phosphoserine intermediate is the Ser-109.

Belongs to the APS kinase family.

It catalyses the reaction adenosine 5'-phosphosulfate + ATP = 3'-phosphoadenylyl sulfate + ADP + H(+). It functions in the pathway sulfur metabolism; hydrogen sulfide biosynthesis; sulfite from sulfate: step 2/3. In terms of biological role, catalyzes the synthesis of activated sulfate. This is Adenylyl-sulfate kinase from Clostridium kluyveri (strain ATCC 8527 / DSM 555 / NBRC 12016 / NCIMB 10680 / K1).